Consider the following 132-residue polypeptide: Small ribosomal subunit protein uS8 (132 aa).

Belongs to the universal ribosomal protein uS8 family. In terms of assembly, part of the 30S ribosomal subunit. Contacts proteins S5 and S12.

Its function is as follows. One of the primary rRNA binding proteins, it binds directly to 16S rRNA central domain where it helps coordinate assembly of the platform of the 30S subunit. In Coprothermobacter proteolyticus (strain ATCC 35245 / DSM 5265 / OCM 4 / BT), this protein is Small ribosomal subunit protein uS8.